The following is a 236-amino-acid chain: Probable glutathione S-transferase GSTU6 (236 aa).

The GST N-terminal domain occupies 5 to 84; the sequence is GELKLLGVWS…YIDEVWPGGA (80 aa). Glutathione is bound by residues Ser15, Lys42, Val56, and 68–69; that span reads ES. A GST C-terminal domain is found at 94–228; the sequence is DPYERAVARF…KLLEFRQTLL (135 aa).

It belongs to the GST superfamily. Tau family. As to expression, expressed in seedling shoots and roots.

The enzyme catalyses RX + glutathione = an S-substituted glutathione + a halide anion + H(+). Functionally, conjugation of reduced glutathione to a wide number of exogenous and endogenous hydrophobic electrophiles. This is Probable glutathione S-transferase GSTU6 (GSTU6) from Oryza sativa subsp. japonica (Rice).